The primary structure comprises 657 residues: Splicing factor Cactin (657 aa).

Basic residues predominate over residues 1 to 15 (MGKDSKKHKKERRRE). Disordered stretches follow at residues 1-83 (MGKD…EDTL), 369-406 (QESE…ISKK), and 472-503 (ADVD…QGAS). Coiled-coil stretches lie at residues 23-77 (SDEE…RKDA) and 352-403 (RLQL…DEKI). Basic and acidic residues predominate over residues 26 to 60 (ERLQKRLAEQRSLKKDEKRRQKEEMKKNESAEEKR). Residues 61–72 (ARRMEKKMRKDA) show a composition bias toward basic residues. Positions 389–401 (EEEEEEEEDEDDE) are enriched in acidic residues. The span at 489-503 (PSSSAASSGAPQGAS) shows a compositional bias: low complexity.

Belongs to the CACTIN family. In terms of tissue distribution, expressed in pharynx, intestine, vulva and spermatheca (at protein level).

The protein resides in the nucleus. Its subcellular location is the cytoplasm. Functionally, plays a role in pre-mRNA splicing by facilitating excision of a subset of introns. Plays a role during early embryonic development. Required for the distal tip cell migration at the end of larval development and for gonad morphogenesis. This is Splicing factor Cactin (cacn-1) from Caenorhabditis elegans.